The primary structure comprises 84 residues: Beta/gamma-crystallin (84 aa).

Beta/gamma crystallin 'Greek key' domains follow at residues 2 to 42 (GKII…IVES) and 43 to 84 (GTWF…VKQQ). The segment at 64–84 (KYPNPGSWGGNDDELSSVKQQ) is disordered.

Belongs to the beta/gamma-crystallin family. Monomer. As to expression, palps of larvae and otolith of the light-sensing ocellus.

Structural component of the neuroectodermal visual system. The chain is Beta/gamma-crystallin from Ciona intestinalis (Transparent sea squirt).